Consider the following 601-residue polypeptide: Elongation factor 4 (601 aa).

The tr-type G domain maps to 6-188 (NRIRNFCIIA…QVVTKIAPPK (183 aa)). Residues 18-23 (DHGKST) and 135-138 (NKID) each bind GTP.

The protein belongs to the TRAFAC class translation factor GTPase superfamily. Classic translation factor GTPase family. LepA subfamily.

The protein resides in the cell membrane. The enzyme catalyses GTP + H2O = GDP + phosphate + H(+). Required for accurate and efficient protein synthesis under certain stress conditions. May act as a fidelity factor of the translation reaction, by catalyzing a one-codon backward translocation of tRNAs on improperly translocated ribosomes. Back-translocation proceeds from a post-translocation (POST) complex to a pre-translocation (PRE) complex, thus giving elongation factor G a second chance to translocate the tRNAs correctly. Binds to ribosomes in a GTP-dependent manner. The polypeptide is Elongation factor 4 (Desulforamulus reducens (strain ATCC BAA-1160 / DSM 100696 / MI-1) (Desulfotomaculum reducens)).